We begin with the raw amino-acid sequence, 114 residues long: MYYKFSGFTQKLAGAWASEAYSPQGLKPVVSTEAPPIIFATPTKLTSDSTVYDYAGKNKVPELQKFFQKADGVPVYLKRGLPDQMLYRTTMALTVGGTIYCLIALYMASQPKNK.

The transit peptide at 1–55 (MYYKFSGFTQKLAGAWASEAYSPQGLKPVVSTEAPPIIFATPTKLTSDSTVYDYA) directs the protein to the mitochondrion. The residue at position 69 (K69) is an N6-acetyllysine. A helical membrane pass occupies residues 82 to 107 (PDQMLYRTTMALTVGGTIYCLIALYM).

Belongs to the cytochrome c oxidase VIIa family. As to quaternary structure, interacts with the mitochondrial respiratory complexes III (CIII) and IV (CIV), promoting their association.

It is found in the mitochondrion inner membrane. Its function is as follows. Assembly factor that mediates the formation of some mitochondrial respiratory supercomplexes (respirasomes), thereby promoting oxidative phosphorylation and energy metabolism. Acts as a molecular adapter that associates with both mitochondrial respiratory complexes III (CIII) and IV (CIV), promoting their association. Mediates the formation of various mitochondrial respiratory supercomplexes, such as MCIII(2)IV(2), composed of two CIII and two CIV, and the CS-respirasome (MCI(1)III(2)IV(2)), composed of one CI, two CIII and two CIV. Not involved in the formation of the canonical respirasome (MCI(1)III(2)IV(1)), composed of one CI, two CIII and one CIV. The formation of different respirasomes is important for cell adaptation to oxygen conditions and prevent metabolic exhaustion: supercomplexes mediated by COX7A2L/SCAF1 are required to maintain oxidative phosphorylation upon low oxygen conditions and promote metabolic rewiring toward glycolysis. This chain is Cytochrome c oxidase subunit 7A2-like, mitochondrial, found in Homo sapiens (Human).